A 609-amino-acid polypeptide reads, in one-letter code: Arginine--tRNA ligase (609 aa).

Residues Ala-132–His-142 carry the 'HIGH' region motif.

This sequence belongs to the class-I aminoacyl-tRNA synthetase family. In terms of assembly, monomer.

It is found in the cytoplasm. It catalyses the reaction tRNA(Arg) + L-arginine + ATP = L-arginyl-tRNA(Arg) + AMP + diphosphate. This chain is Arginine--tRNA ligase, found in Psychrobacter cryohalolentis (strain ATCC BAA-1226 / DSM 17306 / VKM B-2378 / K5).